We begin with the raw amino-acid sequence, 62 residues long: Conotoxin Pn-B02 (62 aa).

A signal peptide spans 1 to 19 (MRCLPVFIILLLLIASAPS). A propeptide spanning residues 20–49 (FDALPKTEDNVPLSSFHDNLKRTRRIHLNI) is cleaved from the precursor. Residue A61 is modified to Alanine amide.

Belongs to the conotoxin T superfamily. Post-translationally, contains 2 disulfide bonds that can be either 'C1-C3, C2-C4' or 'C1-C4, C2-C3', since these disulfide connectivities have been observed for conotoxins with cysteine framework V (for examples, see AC P0DQQ7 and AC P81755). As to expression, expressed by the venom duct.

The protein resides in the secreted. This is Conotoxin Pn-B02 from Conus pennaceus (Feathered cone).